A 183-amino-acid chain; its full sequence is Adenylate kinase (183 aa).

12–17 (GAGKGT) contributes to the ATP binding site. Residues 32–61 (STGDLLRSEVAAGSELGKEAEAVMNRGELV) form an NMP region. Residues Thr-33, Arg-38, 59–61 (ELV), 86–89 (GFPR), and Gln-93 contribute to the AMP site. The tract at residues 127–133 (SRGRADD) is LID. An ATP-binding site is contributed by Arg-128. AMP-binding residues include Arg-130 and Arg-141. ATP is bound at residue Gly-169.

It belongs to the adenylate kinase family. In terms of assembly, monomer.

Its subcellular location is the cytoplasm. It catalyses the reaction AMP + ATP = 2 ADP. Its pathway is purine metabolism; AMP biosynthesis via salvage pathway; AMP from ADP: step 1/1. Its function is as follows. Catalyzes the reversible transfer of the terminal phosphate group between ATP and AMP. Plays an important role in cellular energy homeostasis and in adenine nucleotide metabolism. This chain is Adenylate kinase, found in Synechococcus sp. (strain CC9902).